We begin with the raw amino-acid sequence, 348 residues long: Ion-translocating oxidoreductase complex subunit D (348 aa).

A run of 5 helical transmembrane segments spans residues 15–35, 36–56, 67–87, 88–108, and 125–145; these read LTAK…GMQA, YFFG…AVAI, LTAF…LAMS, IPPY…LLLA, and VAYA…LVPI. FMN phosphoryl threonine is present on Thr-186. The next 5 membrane-spanning stretches (helical) occupy residues 212–232, 241–261, 265–285, 298–318, and 320–340; these read LFAN…LLLI, IPAA…LLLP, LNVV…FIAT, LIFG…GNYP, and AVAF…HYTQ.

The protein belongs to the NqrB/RnfD family. As to quaternary structure, the complex is composed of six subunits: RnfA, RnfB, RnfC, RnfD, RnfE and RnfG. It depends on FMN as a cofactor.

It is found in the cell inner membrane. Part of a membrane-bound complex that couples electron transfer with translocation of ions across the membrane. The chain is Ion-translocating oxidoreductase complex subunit D from Actinobacillus pleuropneumoniae serotype 7 (strain AP76).